A 263-amino-acid polypeptide reads, in one-letter code: Phosphatidylserine decarboxylase proenzyme (263 aa).

Residues aspartate 90, histidine 146, and serine 230 each act as charge relay system; for autoendoproteolytic cleavage activity in the active site. The active-site Schiff-base intermediate with substrate; via pyruvic acid; for decarboxylase activity is the serine 230. At serine 230 the chain carries Pyruvic acid (Ser); by autocatalysis.

It belongs to the phosphatidylserine decarboxylase family. PSD-B subfamily. Prokaryotic type I sub-subfamily. Heterodimer of a large membrane-associated beta subunit and a small pyruvoyl-containing alpha subunit. Pyruvate serves as cofactor. Post-translationally, is synthesized initially as an inactive proenzyme. Formation of the active enzyme involves a self-maturation process in which the active site pyruvoyl group is generated from an internal serine residue via an autocatalytic post-translational modification. Two non-identical subunits are generated from the proenzyme in this reaction, and the pyruvate is formed at the N-terminus of the alpha chain, which is derived from the carboxyl end of the proenzyme. The autoendoproteolytic cleavage occurs by a canonical serine protease mechanism, in which the side chain hydroxyl group of the serine supplies its oxygen atom to form the C-terminus of the beta chain, while the remainder of the serine residue undergoes an oxidative deamination to produce ammonia and the pyruvoyl prosthetic group on the alpha chain. During this reaction, the Ser that is part of the protease active site of the proenzyme becomes the pyruvoyl prosthetic group, which constitutes an essential element of the active site of the mature decarboxylase.

The protein localises to the cell membrane. The catalysed reaction is a 1,2-diacyl-sn-glycero-3-phospho-L-serine + H(+) = a 1,2-diacyl-sn-glycero-3-phosphoethanolamine + CO2. The protein operates within phospholipid metabolism; phosphatidylethanolamine biosynthesis; phosphatidylethanolamine from CDP-diacylglycerol: step 2/2. Catalyzes the formation of phosphatidylethanolamine (PtdEtn) from phosphatidylserine (PtdSer). This Bacillus subtilis (strain 168) protein is Phosphatidylserine decarboxylase proenzyme.